The following is a 210-amino-acid chain: Probable GTP-binding protein EngB (210 aa).

Residues 25–199 enclose the EngB-type G domain; that stretch reads TGIEVAFAGR…RQKLDSWFNE (175 aa). Residues 33-40, 60-64, 78-81, 145-148, and 178-180 each bind GTP; these read GRSNAGKS, GRTQL, DLPG, TKAD, and FSS. Mg(2+) contacts are provided by Ser-40 and Thr-62.

The protein belongs to the TRAFAC class TrmE-Era-EngA-EngB-Septin-like GTPase superfamily. EngB GTPase family. Requires Mg(2+) as cofactor.

Its function is as follows. Necessary for normal cell division and for the maintenance of normal septation. This is Probable GTP-binding protein EngB from Klebsiella pneumoniae subsp. pneumoniae (strain ATCC 700721 / MGH 78578).